Consider the following 404-residue polypeptide: p-hydroxybenzoate hydroxylase (404 aa).

Residues Glu35, 45–50 (RIRAGI), and Gln105 contribute to the FAD site. Substrate contacts are provided by residues Tyr203, 214 to 216 (SMR), and Tyr224. Asp288 contacts FAD. Substrate is bound at residue Pro295. 301–302 (LN) contacts FAD.

The protein belongs to the aromatic-ring hydroxylase family. As to quaternary structure, homodimer. The cofactor is FAD.

The enzyme catalyses 4-hydroxybenzoate + NADPH + O2 + H(+) = 3,4-dihydroxybenzoate + NADP(+) + H2O. The protein operates within aromatic compound metabolism; benzoate degradation via hydroxylation; 3,4-dihydroxybenzoate from benzoate: step 2/2. Its function is as follows. Catalyzes the incorporation of an atom of dioxygen into p-hydroxybenzoate (p-OHB) to form 3,4-dihydroxybenzoate (3,4DOHB). The reaction occurs in two parts: reduction of the flavin adenine dinucleotide (FAD) in the enzyme by reduced nicotinamide adenine dinucleotide phosphate (NADPH) in response to binding p-hydroxybenzoate to the enzyme and oxidation of reduced FAD with oxygen to form a hydroperoxide, which then oxygenates p-hydroxybenzoate. The polypeptide is p-hydroxybenzoate hydroxylase (pobA) (Acinetobacter baylyi (strain ATCC 33305 / BD413 / ADP1)).